A 1351-amino-acid chain; its full sequence is Tripartite motif-containing protein 66 (1351 aa).

The segment at 105 to 150 (MARNCSECKEKRAAHILCTYCNRWLCSSCTEEHRHSPVPGGPFFPR) adopts a B box-type 1; atypical zinc-finger fold. Positions 109, 112, 133, 139, 169, 172, 192, and 197 each coordinate Zn(2+). The segment at 164–205 (DFTLYCPLHTQEVLKLFCETCDMLTCHSCLVVEHKEHRCRHV) adopts a B box-type 2 zinc-finger fold. Positions 234 to 304 (AKQIEDRIFE…IMVLNRQFEH (71 aa)) form a coiled coil. 3 disordered regions span residues 542 to 608 (FGHH…CSQN), 663 to 730 (APVQ…VRKH), and 857 to 895 (CPLQ…DPSL). Over residues 560 to 588 (QLPPPPPPLPHPPPPLPPPPQQPHPPLPP) the composition is skewed to pro residues. Polar residues predominate over residues 664–676 (PVQSQSQEETLQA). Over residues 872–884 (TGSSSSSGRTSGS) the composition is skewed to low complexity. The PxVxL motif signature appears at 995-999 (PYVRL). The disordered stretch occupies residues 1067-1098 (TSLAGQRPPEVEGTSPEEHRLIPRTPGAKKGP). A PHD-type zinc finger spans residues 1105–1152 (EDFCAVCLNGGELLCCDRCPKVFHLSCHVPALLSFPGGEWVCTLCRSL). Positions 1176–1282 (GLSMYDQKKC…VFFEGWLKEI (107 aa)) constitute a Bromo domain. The disordered stretch occupies residues 1289–1351 (AQPRQEDSDS…FRLANSISQV (63 aa)).

Can form homodimers and heterodimers. Interacts with CBX5, CBX1 and CBX3 via PxVxL motif.

It is found in the nucleus. Its function is as follows. May function as transcription repressor; The repressive effects are mediated, at least in part, by recruitment of deacetylase activity. May play a role as negative regulator of postmeiotic genes acting through CBX3 complex formation and centromere association. This chain is Tripartite motif-containing protein 66 (TRIM66), found in Homo sapiens (Human).